Consider the following 355-residue polypeptide: Sesquiterpene synthase MAJ_08936 (355 aa).

The Mg(2+) site is built by aspartate 91 and aspartate 96. The DDXXXD motif motif lies at 91-96 (DDLFVD). Arginine 184 is a binding site for substrate. The Mg(2+) site is built by asparagine 230, serine 234, and glutamate 238.

It belongs to the terpene synthase family. Mg(2+) serves as cofactor.

It catalyses the reaction (2E,6E)-farnesyl diphosphate + H2O = (+)-corvol ether B + diphosphate. The catalysed reaction is (2E,6E)-farnesyl diphosphate + H2O = (+)-corvol ether A + diphosphate. Terpene synthase that catalyzes the conversion of (2E,6E)-farnesyl diphosphate (FPP) into sesquiterpenes which are important for fungi-environment interactions. Produces a mixture consisting of 8 sesquiterpenes including corvol ethers A and B, as well as traces of epizonarene, gamma-cadinene, delta-cadinene, alpha-cadinene, alpha-cadinol, and an unidentified sesquiterpene. The major product is corvol ether A. The chain is Sesquiterpene synthase MAJ_08936 from Metarhizium majus (strain ARSEF 297).